The sequence spans 189 residues: Large ribosomal subunit protein bL9 (189 aa).

Belongs to the bacterial ribosomal protein bL9 family.

In terms of biological role, binds to the 23S rRNA. This is Large ribosomal subunit protein bL9 from Beijerinckia indica subsp. indica (strain ATCC 9039 / DSM 1715 / NCIMB 8712).